The following is a 159-amino-acid chain: Phosphopantetheine adenylyltransferase (159 aa).

Thr-10 contributes to the substrate binding site. ATP is bound by residues 10–11 and His-18; that span reads TF. Substrate-binding residues include Lys-42, Met-74, and Arg-88. ATP contacts are provided by residues 89–91, Glu-99, and 124–130; these read GLR and WSFISSS.

The protein belongs to the bacterial CoaD family. In terms of assembly, homohexamer. Mg(2+) serves as cofactor.

It is found in the cytoplasm. The catalysed reaction is (R)-4'-phosphopantetheine + ATP + H(+) = 3'-dephospho-CoA + diphosphate. It participates in cofactor biosynthesis; coenzyme A biosynthesis; CoA from (R)-pantothenate: step 4/5. In terms of biological role, reversibly transfers an adenylyl group from ATP to 4'-phosphopantetheine, yielding dephospho-CoA (dPCoA) and pyrophosphate. The polypeptide is Phosphopantetheine adenylyltransferase (Escherichia fergusonii (strain ATCC 35469 / DSM 13698 / CCUG 18766 / IAM 14443 / JCM 21226 / LMG 7866 / NBRC 102419 / NCTC 12128 / CDC 0568-73)).